Consider the following 64-residue polypeptide: DNA-directed RNA polymerase subunit omega (64 aa).

The protein belongs to the RNA polymerase subunit omega family. As to quaternary structure, the RNAP catalytic core consists of 2 alpha, 1 beta, 1 beta' and 1 omega subunit. When a sigma factor is associated with the core the holoenzyme is formed, which can initiate transcription.

The catalysed reaction is RNA(n) + a ribonucleoside 5'-triphosphate = RNA(n+1) + diphosphate. In terms of biological role, promotes RNA polymerase assembly. Latches the N- and C-terminal regions of the beta' subunit thereby facilitating its interaction with the beta and alpha subunits. The polypeptide is DNA-directed RNA polymerase subunit omega (Oceanobacillus iheyensis (strain DSM 14371 / CIP 107618 / JCM 11309 / KCTC 3954 / HTE831)).